Reading from the N-terminus, the 68-residue chain is Large ribosomal subunit protein uL29 (68 aa).

It belongs to the universal ribosomal protein uL29 family.

The polypeptide is Large ribosomal subunit protein uL29 (rpl29) (Pyrococcus abyssi (strain GE5 / Orsay)).